The primary structure comprises 563 residues: MDLEQKTRGLSKSCALLIVIAGMERYAFKGVASNLVTYLTDVVKMSNSRAAKTVNTWAGFTSMLPLFSAPLADTYWDRFFTILASSSVYFVGLVGLTWTAFAGSRSATKTISSYFLYSSLCLVSIGLGVLNPSLQAFGADQLDHDLDKNFDLSSGDQKDAKATRKTQFFQLWYFGVCTGSLMGVTVMAYIQDTFGWVLGFAIPGIVIFLSILVFMSGCGIYVYAPGARLKKKTTTTPFEKILKFIKGRVVKQRSIYTLADEKDLDAMELELEERPLCKCETEDIETPSTTSKGLEDDESSKTVFSGIDNVKLVIRLFPIWMMLLMFAVIFQLPATFFTKQGVTMKRNIGSNFKIPPATLQSTITLSIILLMPLYDKILIPITKRIKKNGTGISVMERMGVGMFLSIIAIVIAAIVERKRLAISQKMKTLPDYDPETVPLSIFWLLPQYILLGISDIFTVVGMQEFFYSEVPVRMRTMGFALYTSVFGVGSFVSAALISIVEAYSSSTGDRQNWFADDMSEARLDKYYWLLALTSTISFVVYIFLCKFFKSSSDQGDEKEEAPK.

The helical transmembrane segment at 56–76 (TWAGFTSMLPLFSAPLADTYW) threads the bilayer. Thr-81 is modified (phosphothreonine). Transmembrane regions (helical) follow at residues 82-102 (ILAS…TAFA), 110-130 (TISS…LGVL), 168-188 (FFQL…TVMA), 194-214 (FGWV…ILVF), 317-337 (FPIW…ATFF), 362-382 (TITL…IPIT), 394-414 (VMER…IAAI), 441-461 (IFWL…TVVG), 479-499 (FALY…LISI), and 528-548 (WLLA…CKFF).

It belongs to the major facilitator superfamily. Proton-dependent oligopeptide transporter (POT/PTR) (TC 2.A.17) family. In terms of tissue distribution, expressed in roots and flowers.

It is found in the membrane. This Arabidopsis thaliana (Mouse-ear cress) protein is Protein NRT1/ PTR FAMILY 5.9 (NPF5.9).